The following is a 370-amino-acid chain: MEILMTVSKFASICTMGANASALEKEIGPEQFPVNEHYFGLVNFGNTCYCNSVLQALYFCRPFREKVLAYKSQPRKKENLLTCLADLFHSIATQKKKVGVIPPKKFITRLRKENELFDNYMQQDAHEFLNYLLNTIADILQEERKQEKQNGRLRNGDVDNEDNNSTPDPTWVHEIFQGTLTNETRCLTCETISSKDEDFLDLSVDVEQNTSITHCLRGFSNTETLCSEYKYYCEECRSKQEAHKRMKVKKLPLILALHLKRFKYMDQLHRYTKLSYRVVFPLELRLFNTSGDATNPDRMYDLVAVVVHCGSGPNRGHYIAIVKSHDFWLLFDDDIVEKIDAQAIEEFYGLTSDISKNSESGYILFYQSRD.

Positions 1–4 (MEIL) match the Required for plasma membrane localization of USP12/WDR20 motif. The 331-residue stretch at 39-369 (FGLVNFGNTC…SGYILFYQSR (331 aa)) folds into the USP domain. Catalysis depends on Cys-48, which acts as the Nucleophile. Positions 146 to 157 (QEKQNGRLRNGD) are enriched in basic and acidic residues. A disordered region spans residues 146–168 (QEKQNGRLRNGDVDNEDNNSTPD). Zn(2+)-binding residues include Cys-186, Cys-189, Cys-233, and Cys-236. Residue His-317 is the Proton acceptor of the active site.

The protein belongs to the peptidase C19 family. USP12/USP46 subfamily. In terms of assembly, interacts with WDR48. Interacts with WDR20; this interaction promotes translocation of the USP12 complex to the plasma membrane. Component of the USP12/WDR20/WDR48 deubiquitinating complex. Component of the USP12/DMWD/WDR48 deubiquitinating complex. Interacts with PHLPP1. Interacts with RBPJ. Interacts with CBP; this interaction blocks the acetyltransferase activity of CREBBP.

Its subcellular location is the nucleus. It localises to the cytoplasm. The protein resides in the cell membrane. The catalysed reaction is Thiol-dependent hydrolysis of ester, thioester, amide, peptide and isopeptide bonds formed by the C-terminal Gly of ubiquitin (a 76-residue protein attached to proteins as an intracellular targeting signal).. With respect to regulation, activated by interaction with WDR20; WDR48 and DMWD through different allosteric mechanisms. In terms of biological role, deubiquitinating enzyme that plays various roles in the regulation of the immune response and inflammation. During TCR engagement and activation, translocates into the cytoplasm and deubiquitinates its substrates LAT and TRAT1 and prevents their lysosome-dependent degradation to stabilize the TCR signaling complex at the plasma membrane. Plays an essential role in the selective LPS-induced macrophage response through the activation of NF-kappa-B pathway. In addition, promotes that antiviral immune response through targeting DNA sensor IFI16 to inhibit its proteasome-dependent degradation. Participates in the interferon signaling pathway and antiviral response independently of its deubiquitinase activity by maintaining nuclear phosphorylated STAT1 levels via inhibition of its CREBBP-mediated acetylation and subsequent dephosphorylation. Plays an intrinsic role in promoting the differentiation, activation and proliferation of CD4(+) T-cell by activating the NF-kappa-B signaling pathway through deubiquitinating and stabilizing B-cell lymphoma/leukemia 10/BCL10. In myeloid-derived suppressor cells promotes the activation of the NF-kappa-B via deubiquitination and stabilization of RELA. Regulates the 'Lys-63'-linked polyubiquitin chains of BAX and thereby modulates the mitochondrial apoptotic process. Negative regulator of NOTCH signaling that specifically deubiquitinates non-activated NOTCH receptors to target them for lysosomal degradation; deubiquitination of NOTCH stimulates its transport form late endosomes to lysosomes. Protects neurons against HTT/huntingtin-induced polyglutamine expansion-dependent neurodegeneration through regulation of autophagic flux. This function is independent of deubiquitinase activity or of other components of the USP12-WDR20-WDR48 deubiquitinating complex. In complex with WDR48, acts as a potential tumor suppressor by positively regulating PHLPP1 stability. The chain is Ubiquitin carboxyl-terminal hydrolase 12 (Usp12) from Mus musculus (Mouse).